Consider the following 306-residue polypeptide: uncharacterized protein (306 aa).

9 helical membrane passes run 13–33 (VLLSQFLNGYEWAVPWIFAFI), 53–73 (PLPMILALFVLHIFMPLFAWG), 86–106 (ITGLTLAVVIPTGITSLIWAA), 112–132 (VGLTLSIILVDTVLSPLIVPL), 147–167 (WGMMKGLIVMVVIPSFLGMLF), 177–197 (AFVSSALSPFSKLCLMAVIAI), 214–234 (AGIAVTVFFIALTGYAAAWLI), 246–268 (VSLIFTGGMRNISAGAVLAVTFF), and 272–294 (VAVPVVIGMLFQQILAALFGYML).

The protein localises to the cell membrane. This is an uncharacterized protein from Bacillus subtilis (strain 168).